Here is a 237-residue protein sequence, read N- to C-terminus: Pyridoxal phosphate homeostasis protein (237 aa).

The residue at position 31 (K31) is an N6-(pyridoxal phosphate)lysine.

The protein belongs to the pyridoxal phosphate-binding protein YggS/PROSC family.

Its subcellular location is the cytoplasm. The protein localises to the nucleus. In terms of biological role, pyridoxal 5'-phosphate (PLP)-binding protein, which may be involved in intracellular homeostatic regulation of pyridoxal 5'-phosphate (PLP), the active form of vitamin B6. This is Pyridoxal phosphate homeostasis protein from Schizosaccharomyces pombe (strain 972 / ATCC 24843) (Fission yeast).